Here is a 322-residue protein sequence, read N- to C-terminus: Solute carrier family 35 member B1 (322 aa).

A run of 8 helical transmembrane segments spans residues 12 to 32 (LRLP…GILQ), 51 to 71 (FALT…KILI), 85 to 105 (WLYA…NSAL), 136 to 156 (YPLA…LFMY), 168 to 188 (TVGF…LTGV), 210 to 230 (LWST…WEFL), 243 to 263 (ILLF…TVVY), and 285 to 305 (VILF…LVFL). The Di-lysine motif motif lies at 318–322 (KKTSH).

It belongs to the nucleotide-sugar transporter family. SLC35B subfamily.

It localises to the endoplasmic reticulum membrane. The catalysed reaction is ADP(in) + ATP(out) = ADP(out) + ATP(in). It carries out the reaction UDP(out) + ATP(in) = UDP(in) + ATP(out). It catalyses the reaction UTP(out) + ATP(in) = UTP(in) + ATP(out). The enzyme catalyses dATP(out) + ATP(in) = dATP(in) + ATP(out). Functionally, ATP:ADP antiporter that catalyzes the exchange of ATP and ADP across the endoplasmic reticulum (ER) membrane. Imports ATP from the cytosol to the ER lumen and exports ADP in the opposite direction. Regulates ER energy metabolism and protein biogenesis. Appears to be part of a calcium-dependent ER to cytosol low energy response axis, where calcium efflux from ER to the cytosol triggers ATP import into the ER lumen to maintain sufficient ATP supply. Provides ATP to ER chaperone HSPA5 that drives protein folding and trafficking in the ER. Can transport dATP, UTP or UDP in exchange for ATP, but the physiological relevance of this process remains to be established. The chain is Solute carrier family 35 member B1 (Slc35b1) from Mus musculus (Mouse).